The sequence spans 492 residues: Solute carrier family 2, facilitated glucose transporter member 1 (492 aa).

Met-1 bears the N-acetylmethionine mark. Residues 1–11 are Cytoplasmic-facing; that stretch reads MEPSSKKLTGR. Residues 12 to 33 form a helical membrane-spanning segment; it reads LMLAVGGAVLGSLQFGYNTGVI. Topologically, residues 34–66 are extracellular; sequence NAPQKVIEEFYNQTWLHRYGESISPATLTTLWS. Asn-45 carries N-linked (GlcNAc...) asparagine glycosylation. The chain crosses the membrane as a helical span at residues 67–87; sequence LSVAIFSVGGMIGSFSVGLFV. At 88-90 the chain is on the cytoplasmic side; that stretch reads NRF. Residues 91–112 traverse the membrane as a helical segment; that stretch reads GRRNSMLMMNLLAFISAVLMGF. Residues 113–120 lie on the Extracellular side of the membrane; that stretch reads SKLGKSFE. Residues 121-144 traverse the membrane as a helical segment; it reads MLILGRFIIGVYCGLTTGFVPMYV. Over 145–155 the chain is Cytoplasmic; that stretch reads GEVSPTALRGA. A helical membrane pass occupies residues 156-176; it reads LGTLHQLGIVVGILIAQVFGL. Residue Gln-161 participates in D-glucose binding. Over 177-185 the chain is Extracellular; the sequence is DSIMGNEEL. The helical transmembrane segment at 186–206 threads the bilayer; sequence WPLLLSVIFIPALLQCVLLPF. Over 207 to 271 the chain is Cytoplasmic; it reads CPESPRFLLI…LFRSAAYRQP (65 aa). The residue at position 226 (Ser-226) is a Phosphoserine. Residues 272–293 traverse the membrane as a helical segment; sequence ILIAVVLQLSQQLSGINAVFYY. Residues 282–283 and Asn-288 contribute to the D-glucose site; that span reads QQ. Residues 294–306 lie on the Extracellular side of the membrane; that stretch reads STSIFEKAGVQQP. Residues 307 to 328 form a helical membrane-spanning segment; that stretch reads VYATIGSGIVNTAFTVVSLFVV. Asn-317 lines the D-glucose pocket. Topologically, residues 329-334 are cytoplasmic; the sequence is ERAGRR. A helical transmembrane segment spans residues 335 to 355; the sequence is TLHLIGLAGMAGCAVLMTIAL. The Extracellular portion of the chain corresponds to 356 to 365; that stretch reads ALLEQLPWMS. Residues 366–388 form a helical membrane-spanning segment; it reads YLSIVAIFGFVAFFEVGPGPIPW. Residues Glu-380 and Trp-388 each coordinate D-glucose. Residues 389–401 lie on the Cytoplasmic side of the membrane; sequence FIVAELFSQGPRP. A helical membrane pass occupies residues 402-422; that stretch reads AAIAVAGFSNWTSNFIVGMCF. Over 423–429 the chain is Extracellular; the sequence is QYVEQLC. A helical membrane pass occupies residues 430-450; that stretch reads GPYVFIIFTVLLVLFFIFTYF. Ser-465 carries the phosphoserine modification. The segment at 468 to 492 is disordered; it reads RQGGASQSDKTPEELFHPLGADSQV. Thr-478 is modified (phosphothreonine). A Phosphoserine modification is found at Ser-490.

This sequence belongs to the major facilitator superfamily. Sugar transporter (TC 2.A.1.1) family. Glucose transporter subfamily. Found in a complex with ADD2, DMTN and SLC2A1. Interacts (via C-terminus cytoplasmic region) with DMTN. Interacts with SNX27; the interaction is required when endocytosed to prevent degradation in lysosomes and promote recycling to the plasma membrane. Interacts with GIPC (via PDZ domain). Interacts with STOM. Interacts with SGTA (via Gln-rich region). Interacts with BSG. Interacts with SMIM43; the interaction may promote SLC2A1-mediated glucose transport to meet the energy needs of mesendoderm differentiation. Phosphorylation at Ser-226 by PKC promotes glucose uptake by increasing cell membrane localization.

The protein resides in the cell membrane. It is found in the photoreceptor inner segment. It carries out the reaction D-glucose(out) = D-glucose(in). With respect to regulation, the uptake of glucose is inhibited by cytochalasin B. Glucose uptake is increased in response to phorbol ester 12-O-tetradecanoylphorbol-13-acetate (TPA) treatment: TPA-induced glucose uptake requires phosphorylation at Ser-226. Its function is as follows. Facilitative glucose transporter, which is responsible for constitutive or basal glucose uptake. Has a very broad substrate specificity; can transport a wide range of aldoses including both pentoses and hexoses. Most important energy carrier of the brain: present at the blood-brain barrier and assures the energy-independent, facilitative transport of glucose into the brain. In association with BSG and NXNL1, promotes retinal cone survival by increasing glucose uptake into photoreceptors. Required for mesendoderm differentiation. This chain is Solute carrier family 2, facilitated glucose transporter member 1, found in Sus scrofa (Pig).